Here is a 299-residue protein sequence, read N- to C-terminus: NmrA-like family domain-containing protein 1 (299 aa).

NADP(+)-binding positions include 11-16 (GATGAQ), 37-41 (RDPGQ), 58-59 (DQ), 79-81 (TNY), K92, K133, and 155-158 (YFEN). Positions 153–189 (PCYFENLLSYFLPQKAPDGRSYLLSLPMGDVPIDGMS) are interaction with ASS1.

The protein belongs to the NmrA-type oxidoreductase family. As to quaternary structure, homodimer. Interacts with ASS1. Interaction is enhanced by low NADPH/NADP(+) ratios, which results in inhibition of ASS1 activity.

Its subcellular location is the cytoplasm. It localises to the perinuclear region. The protein localises to the nucleus. Redox sensor protein. Undergoes restructuring and subcellular redistribution in response to changes in intracellular NADPH/NADP(+) levels. At low NADPH concentrations the protein is found mainly as a monomer, and binds argininosuccinate synthase (ASS1), the enzyme involved in nitric oxide synthesis. Association with ASS1 impairs its activity and reduces the production of nitric oxide, which subsecuently prevents apoptosis. Under normal NADPH concentrations, the protein is found as a dimer and hides the binding site for ASS1. The homodimer binds one molecule of NADPH. Has higher affinity for NADPH than for NADP(+). Binding to NADPH is necessary to form a stable dimer. This Bos taurus (Bovine) protein is NmrA-like family domain-containing protein 1 (NMRAL1).